The primary structure comprises 666 residues: MALFYVARYPGPDAAAAAGPEGAEAGAHGRARALLERLQSRARERQQQREPAQTEAAASTEPATRRRRRPRRRRRVNDAEPGSPEAPQGKRRKADGEDAGAESNEEAPGEPSAGSSEEAPGEPSAGSSEEAPGERSTSASAEAAPDGPALEEAAGPLVPGLVLGGFGKRKAPKVQPFLPRWLAEPNCVRRNVTEDLVPIEDIPDVHPDLQKQLRAHGISSYFPVQAAVIPALLESAACGFLVGRGGYRPSDLCVSAPTGSGKTLAFVIPVVQALLSRVVCHIRALVVLPTKELAQQVSKVFNIYTDATPLRVSLVTGQKSLAKEQESLVQKTADGYRCLADIVVATPGRLVDHIDQTPGFSLQQLRFLIIDEADRMIDSMHQSWLPRVVAAAFQSEDPADPCALLQRRQAQAVTAASTCCPQMPLQKLLFSATLTQNPEKLQQLGLHQPRLFSTGLAHRGLEDTDGDGDSGKYAFPVGLTHHYVPCSLSSKPLVVLHLVLEMGFSRVLCFTNSRENSHRLFLLVQAFGGVDVAEFSSRYGPGQRRMILKQFEQGKIQLLISTDATARGIDVQGVELVVNYDAPQYLRTYVHRVGRTARAGKTGQAFTLLLKVQERRFLRMLTEAGAPELQRHELSSKLLQPLVPRYEEALSQLEESVKEERKQRAA.

At Ala2 the chain carries N-acetylalanine. The disordered stretch occupies residues 9-152 (YPGPDAAAAA…AAPDGPALEE (144 aa)). Residues 10 to 28 (PGPDAAAAAGPEGAEAGAH) are compositionally biased toward low complexity. Residues 33–48 (ALLERLQSRARERQQQ) are compositionally biased toward basic and acidic residues. Residues 49 to 58 (REPAQTEAAA) are compositionally biased toward low complexity. Over residues 65–75 (RRRRRPRRRRR) the composition is skewed to basic residues. Ser83 and Ser103 each carry phosphoserine. Residues 97–108 (EDAGAESNEEAP) are compositionally biased toward acidic residues. The Q motif signature appears at 221-229 (YFPVQAAVI). One can recognise a Helicase ATP-binding domain in the interval 243-452 (GRGGYRPSDL…QLGLHQPRLF (210 aa)). 256–263 (APTGSGKT) provides a ligand contact to ATP. Positions 371 to 374 (DEAD) match the DEAD box motif. The Helicase C-terminal domain maps to 494–640 (VVLHLVLEMG…RHELSSKLLQ (147 aa)).

The protein belongs to the DEAD box helicase family. DDX51/DBP6 subfamily.

Its subcellular location is the nucleus. It localises to the nucleolus. It carries out the reaction ATP + H2O = ADP + phosphate + H(+). ATP-binding RNA helicase involved in the biogenesis of 60S ribosomal subunits. In Homo sapiens (Human), this protein is ATP-dependent RNA helicase DDX51 (DDX51).